The following is a 437-amino-acid chain: MIQSDAYTESAGYLAARPPTLEIFPSWPMSHLQEPYSNSQSVGSTTDSSSAQNTMSQAELVSPASMRSDSGQEQQQQEVLMVTIDDYNYKQGLGAAIATAPSFQQHAGGLDMRKHGSTRKDGKLLDAKTERRLAQNREAARKSRLRKKAYVQQLETSRIRLQQIEQELQRARSQGLFPGGCSAPGDMSSGAVMFDMDYTRWIDDDSKCMAELQGALQAQLPDGNLGAIVEECMRHYDELFHLRAVLASSDVFHLMTGMWAAPAERCFLWMAGFRPSEILKMLIPQLDPLTEQQLMGMCSLQQSSEQTEEALAQGLHQLHQSLADAVGGGPLNDGADVANYTGLMALALGRLENLESFYRQADNLRQETLHHMRRILTTRQTARCFLSIGEYNRRLRALSSLWASRPRENFIATENVSPTGTEFQVIQQSQQNQFSGF.

Residues 33–75 (QEPYSNSQSVGSTTDSSSAQNTMSQAELVSPASMRSDSGQEQQ) are disordered. Residues 37-50 (SNSQSVGSTTDSSS) are compositionally biased toward low complexity. A compositionally biased stretch (polar residues) spans 51 to 75 (AQNTMSQAELVSPASMRSDSGQEQQ). In terms of domain architecture, bZIP spans 126-170 (DAKTERRLAQNREAARKSRLRKKAYVQQLETSRIRLQQIEQELQR). Residues 128-148 (KTERRLAQNREAARKSRLRKK) form a basic motif region. Residues 154 to 168 (LETSRIRLQQIEQEL) are leucine-zipper. Residues 191 to 405 (AVMFDMDYTR…RALSSLWASR (215 aa)) form the DOG1 domain.

The protein belongs to the bZIP family. As to quaternary structure, interacts with NPR5/NH4, NH5.1 and NH5.2.

It localises to the nucleus. In terms of biological role, transcriptional regulator involved in defense response. This Oryza sativa subsp. japonica (Rice) protein is Transcription factor TGAL5.